A 394-amino-acid chain; its full sequence is Elongation factor Tu (394 aa).

Residues 10-204 (KTHLNVGTIG…TLDTYIEDPV (195 aa)) form the tr-type G domain. Positions 19–26 (GHVDHGKT) are G1. A GTP-binding site is contributed by 19-26 (GHVDHGKT). A Mg(2+)-binding site is contributed by Thr-26. Positions 60–64 (GITIK) are G2. Positions 81-84 (DCPG) are G3. GTP is bound by residues 81-85 (DCPGH) and 136-139 (NKCD). Residues 136 to 139 (NKCD) are G4. Residues 174–176 (SAL) form a G5 region.

This sequence belongs to the TRAFAC class translation factor GTPase superfamily. Classic translation factor GTPase family. EF-Tu/EF-1A subfamily. In terms of assembly, monomer.

It localises to the cytoplasm. It catalyses the reaction GTP + H2O = GDP + phosphate + H(+). GTP hydrolase that promotes the GTP-dependent binding of aminoacyl-tRNA to the A-site of ribosomes during protein biosynthesis. The protein is Elongation factor Tu of Aster yellows witches'-broom phytoplasma (strain AYWB).